Consider the following 214-residue polypeptide: Cytolysin tenebrosin-B (214 aa).

The N-terminal stretch at 1-19 (MNRLIIVFIVVTMICAATA) is a signal peptide. The propeptide occupies 20-35 (LSTKRRINKEEKDEKR). A plays an important role in the hemolytic activity region spans residues 38–47 (AVAGAVIEGA). The N-terminal region stretch occupies residues 46–65 (GATLTFNVLQTVLKALGDIS). Residues Ser89, Val122, Ser140, Pro142, Tyr168, Tyr172, and Tyr173 each contribute to the phosphocholine site. The segment at 140–155 (SIPFDYNLYSNWWNVK) is trp-rich region, which is important for the binding to lipid membrane. The Cell attachment site, crucial for protein stability signature appears at 179–181 (RGD).

Belongs to the actinoporin family. Sea anemone subfamily. As to quaternary structure, octamer or nonamer in membranes. Monomer in the soluble state.

It localises to the secreted. Its subcellular location is the nematocyst. The protein resides in the target cell membrane. Pore-forming protein that forms cations-selective hydrophilic pores of around 1 nm and causes cardiac stimulation and cytolysis. Pore formation is a multi-step process that involves specific recognition of membrane sphingomyelin (but neither cholesterol nor phosphatidylcholine) using aromatic rich region and adjacent phosphocholine (POC) binding site, firm binding to the membrane (mainly driven by hydrophobic interactions) accompanied by the transfer of the N-terminal region to the lipid-water interface and finally pore formation after oligomerization of monomers. The sequence is that of Cytolysin tenebrosin-B from Actinia tenebrosa (Australian red waratah sea anemone).